Reading from the N-terminus, the 1153-residue chain is PPi-type phosphoenolpyruvate carboxykinase 3 (1153 aa).

Residues 1085-1131 (RQKLEVAKLNKDLAYLNKTIAEKPRLAETLNKQIAAVKEELQYVSSE) adopt a coiled-coil conformation.

The protein belongs to the PPi-type phosphoenolpyruvate carboxykinase family. As to quaternary structure, monomer and trimer; forms heterotrimers with PEPCK1 and PEPCK2.

It is found in the cytoplasm. The protein resides in the cytosol. The catalysed reaction is oxaloacetate + diphosphate = phosphoenolpyruvate + phosphate + CO2. Inorganic pyrophosphate (PPi)-dependent phosphoenolpyruvate carboxykinase, which regulates the carbon flow of the central metabolism by fixing CO(2) to phosphoenolpyruvate to produce oxaloacetate. Can also produce pyruvate and diphosphate from phosphoenolpyruvate and phosphate. The sequence is that of PPi-type phosphoenolpyruvate carboxykinase 3 from Entamoeba histolytica (strain ATCC 30459 / HM-1:IMSS / ABRM).